The primary structure comprises 533 residues: Glucose-6-phosphate isomerase (533 aa).

Glu341 (proton donor) is an active-site residue. Active-site residues include His372 and Lys501.

Belongs to the GPI family.

The protein localises to the cytoplasm. The catalysed reaction is alpha-D-glucose 6-phosphate = beta-D-fructose 6-phosphate. It participates in carbohydrate biosynthesis; gluconeogenesis. It functions in the pathway carbohydrate degradation; glycolysis; D-glyceraldehyde 3-phosphate and glycerone phosphate from D-glucose: step 2/4. Catalyzes the reversible isomerization of glucose-6-phosphate to fructose-6-phosphate. The chain is Glucose-6-phosphate isomerase from Cereibacter sphaeroides (strain ATCC 17023 / DSM 158 / JCM 6121 / CCUG 31486 / LMG 2827 / NBRC 12203 / NCIMB 8253 / ATH 2.4.1.) (Rhodobacter sphaeroides).